A 350-amino-acid polypeptide reads, in one-letter code: tRNA N6-adenosine threonylcarbamoyltransferase (350 aa).

Fe cation contacts are provided by histidine 113 and histidine 117. Residues 135–139 (LVSGG), aspartate 169, glycine 182, aspartate 186, and asparagine 282 contribute to the substrate site. Aspartate 310 lines the Fe cation pocket.

The protein belongs to the KAE1 / TsaD family. Fe(2+) is required as a cofactor.

It is found in the cytoplasm. The catalysed reaction is L-threonylcarbamoyladenylate + adenosine(37) in tRNA = N(6)-L-threonylcarbamoyladenosine(37) in tRNA + AMP + H(+). Required for the formation of a threonylcarbamoyl group on adenosine at position 37 (t(6)A37) in tRNAs that read codons beginning with adenine. Is involved in the transfer of the threonylcarbamoyl moiety of threonylcarbamoyl-AMP (TC-AMP) to the N6 group of A37, together with TsaE and TsaB. TsaD likely plays a direct catalytic role in this reaction. The protein is tRNA N6-adenosine threonylcarbamoyltransferase of Corynebacterium diphtheriae (strain ATCC 700971 / NCTC 13129 / Biotype gravis).